We begin with the raw amino-acid sequence, 106 residues long: SH3 domain-binding glutamic acid-rich-like protein 2 (106 aa).

The SH3-binding motif lies at Q61–P67.

Belongs to the SH3BGR family.

It is found in the nucleus. The polypeptide is SH3 domain-binding glutamic acid-rich-like protein 2 (sh3bgrl2) (Xenopus tropicalis (Western clawed frog)).